Consider the following 78-residue polypeptide: Major outer membrane lipoprotein Lpp (78 aa).

Positions 1-20 are cleaved as a signal peptide; sequence MKATKLVLGAVILGSTLLAG. C21 carries the N-palmitoyl cysteine lipid modification. C21 carries the S-diacylglycerol cysteine lipid modification. 2 repeats span residues 24–34 and 38–48; these read NAKIDQLSSDV and NAKVDQLSNDV. Residues 27-75 are a coiled coil; sequence IDQLSSDVQTLNAKVDQLSNDVNAMRSDVQAAKDDAARANQRLDNMATK. K78 is subject to N6-murein peptidoglycan lysine.

The protein belongs to the Lpp family. Homotrimer.

It localises to the cell outer membrane. The protein resides in the secreted. It is found in the cell wall. A highly abundant outer membrane lipoprotein that controls the distance between the inner and outer membranes. The only protein known to be covalently linked to the peptidoglycan network (PGN). Also non-covalently binds the PGN. The link between the cell outer membrane and PGN contributes to maintenance of the structural and functional integrity of the cell envelope, and maintains the correct distance between the PGN and the outer membrane. The chain is Major outer membrane lipoprotein Lpp from Shigella flexneri.